The chain runs to 438 residues: Enolase (438 aa).

Substrate-binding residues include H159 and E168. E211 functions as the Proton donor in the catalytic mechanism. Residues D246, E297, and D322 each coordinate Mg(2+). Substrate is bound by residues E297 and D322. The active-site Proton acceptor is K347. Substrate contacts are provided by residues 374–377 (SHRS) and K398.

It belongs to the enolase family. Homodimer. Mg(2+) is required as a cofactor.

It is found in the cytoplasm. The catalysed reaction is (2R)-2-phosphoglycerate = phosphoenolpyruvate + H2O. It functions in the pathway carbohydrate degradation; glycolysis; pyruvate from D-glyceraldehyde 3-phosphate: step 4/5. In Alternaria alternata (Alternaria rot fungus), this protein is Enolase (ENO).